The sequence spans 218 residues: Phosphoglycolate phosphatase (218 aa).

The active-site Nucleophile is the aspartate 7. Aspartate 7, aspartate 9, and aspartate 167 together coordinate Mg(2+).

Belongs to the HAD-like hydrolase superfamily. CbbY/CbbZ/Gph/YieH family. Mg(2+) is required as a cofactor.

The enzyme catalyses 2-phosphoglycolate + H2O = glycolate + phosphate. The protein operates within organic acid metabolism; glycolate biosynthesis; glycolate from 2-phosphoglycolate: step 1/1. Specifically catalyzes the dephosphorylation of 2-phosphoglycolate. Is involved in the dissimilation of the intracellular 2-phosphoglycolate formed during the DNA repair of 3'-phosphoglycolate ends, a major class of DNA lesions induced by oxidative stress. This Cereibacter sphaeroides (Rhodobacter sphaeroides) protein is Phosphoglycolate phosphatase.